A 339-amino-acid chain; its full sequence is Polyhydroxybutyrate depolymerase (339 aa).

The N-terminal stretch at M1–A20 is a signal peptide. The active site involves S39. C70 and C79 are disulfide-bonded. Residue D121 is part of the active site. N144 carries an N-linked (GlcNAc...) asparagine glycan. H155 is an active-site residue. Cystine bridges form between C169-C180, C234-C241, and C250-C304. (3R)-hydroxybutanoate trimer is bound at residue W307.

This sequence belongs to the carbohydrate esterase 1 (CE1) family.

It is found in the secreted. It catalyses the reaction [(3R)-hydroxybutanoate](n) + H2O = [(3R)-hydroxybutanoate](n-1) + (R)-3-hydroxybutanoate + H(+). Its activity is regulated as follows. The enzyme is completely inhibited by dithiothreitol (DTT) and diisopropylfluorophosphate (DFP), and partially inhibited by HgCl(2) and by enzyme3-(p-nitrophenoxy)propane (EPNP). Activity is not affected by N-ethylmaleimide (NEM) or phenylmethylsulfonyl fluoride (PMSF). Esterase involved in the hydrolysis of polyhydroxybutyrate, a microbial polyester that can be produced from renewable resources. The chain is Polyhydroxybutyrate depolymerase from Talaromyces funiculosus (Fruitlet core rot fungus).